Here is a 525-residue protein sequence, read N- to C-terminus: MATLLRSLALFKRNKDKPPITSGSGGAIRGIKHIIIVPIPGDSSITTRSRLLDRLVRLIGNPDVSGPKLTGALIGILSLFVESPGQLIQRITDDPDVSIRLLEVVQSDQSQSGLTFASRGTNMEDEADQYFSHDDPSSSDQPRFGWFENKEISDIEVQDPEGFNMILGTILAQIWVLLAKAVTAPDTAADSELRRWIKYTQQRRVVGEFRLERKWLDVVRNRIAEDLSLRRFMVALIQDIKRTPGNKPRIAEMICDIDTYIVEAGLASFILTIKFGIETMYPALGLHEFAGELSTLESLMNLYQQMGETAPYMVILENSIQNKFSAGSYPLLWSYAMGVGVELENSMGGLNFGRSYFDPAYFRLGQEMVRRSAGKVSSTLASELGITAEDARLVSEIAMHTTEDRISRAVGPRQAQVSFLHGDQSENELPRWEGKEDMRVKQSRGEARESYRETGPSRASDARAAHLPTDTPLDIDTASEPSQDPQDSRRSAEALLRLQAMAGISEEQGSDTDTPRVYNDRDLLE.

The homomultimerization stretch occupies residues 1 to 36 (MATLLRSLALFKRNKDKPPITSGSGGAIRGIKHIII). The tract at residues 1 to 375 (MATLLRSLAL…QEMVRRSAGK (375 aa)) is RNA packaging and organization of the helical nucleocapsid. A ncore region spans residues 1-403 (MATLLRSLAL…VSEIAMHTTE (403 aa)). The Nuclear localization signal motif lies at 70 to 77 (TGALIGIL). Residues lysine 180, arginine 195, glutamine 202, and tyrosine 260 each coordinate RNA. Threonine 279 bears the Phosphothreonine; by host mark. RNA is bound at residue asparagine 351. Residues 373–391 (AGKVSSTLASELGITAEDA) are homomultimerization. The interval 404–525 (DRISRAVGPR…RVYNDRDLLE (122 aa)) is ntail. Residues 418–525 (SFLHGDQSEN…RVYNDRDLLE (108 aa)) are disordered. Residues 425 to 440 (SENELPRWEGKEDMRV) carry the Nuclear export signal motif. Basic and acidic residues predominate over residues 428-452 (ELPRWEGKEDMRVKQSRGEARESYR). An interaction with the phosphoprotein region spans residues 477–505 (TASEPSQDPQDSRRSAEALLRLQAMAGIS).

This sequence belongs to the paramyxoviruses nucleocapsid family. In terms of assembly, homomultimer; forms the nucleocapsid. Binds to viral genomic RNA. N0 interacts (via Ncore) with the phosphoprotein (via N-terminus); this interaction allows P to chaperon N0 to avoid N polymerization and non-specific RNA binding before encapsidation. Interacts (via the Ntail) as N-RNA template with the phosphoprotein (via C-terminus XD); this interaction maintains the P/L complex anchored to the nucleocapsid template during the sequential transcription. Interacts with the phosphoprotein; this interaction leads to the formation of membraneless organelles that function as viral replication factories. Interacts with human FCGR2B protein. Interacts with human PPIA/CYPA and PPIB/CYPB. In terms of processing, phosphorylation at Thr-279 is required for the formation of the nucleocapsid.

It localises to the virion. The protein resides in the host cytoplasm. It is found in the host nucleus. Forms the helical nucleocapsid (NC) in a ratio of 1 N per 6 ribonucleotides, protecting the genome from nucleases. The nucleocapsid (NC) has a helical structure with either 12.35 or 11.64 N per turn, approximately 20 nm in diameter, with a hollow central cavity approximately 5 nm in diameter. The encapsidated genomic RNA serves as template for transcription and replication; encapsidation by N is coupled to RNA synthesis. Forms the encapsidation complex with the phosphoprotein protein P. Before encapsidation, the newly synthesized free N protein, so-called N0, is chaperoned by P. Participates, together with P, in the formation of viral factories (viroplasms), which are large inclusions in the host cytoplasm where replication takes place. N is released in the blood following lysis of measles infected cells, it interacts then with human FCGR2B on immune cells, inducing apoptosis and blocking inflammatory immune response. The sequence is that of Nucleoprotein (N) from Homo sapiens (Human).